Reading from the N-terminus, the 684-residue chain is RNA helicase NPH-II (684 aa).

The Helicase ATP-binding domain maps to 184-359 (FRAWAARRPT…EFFPDAEFVH (176 aa)). 197 to 204 (GGTGVGKT) is a binding site for ATP. The DEXH box motif lies at 308–311 (DEVH). The Helicase C-terminal domain occupies 392–563 (NVSAALSAHR…DLYVQPSDLE (172 aa)).

Belongs to the DEAD box helicase family. DEAH subfamily. Monomer.

Its subcellular location is the virion. The enzyme catalyses ATP + H2O = ADP + phosphate + H(+). NTP-dependent helicase that catalyzes unidirectional unwinding of 3'tailed duplex RNAs and plays an important role during transcription of early mRNAs, presumably by preventing R-loop formation behind the elongating RNA polymerase. Might also play a role in the export of newly synthesized mRNA chains out of the core into the cytoplasm. Required for replication and propagation of viral particles. In Homo sapiens (Human), this protein is RNA helicase NPH-II (NPH2).